Consider the following 480-residue polypeptide: Type II methyltransferase M.NspV (480 aa).

The protein belongs to the methyltransferase superfamily.

Its function is as follows. A gamma subtype methylase that recognizes the double-stranded sequence 5'-TTCGAA-3', and methylates it on an unknown base to protect it against the NspV endonuclease. This chain is Type II methyltransferase M.NspV, found in Nostoc sp. (strain ATCC 29411 / PCC 7524).